We begin with the raw amino-acid sequence, 90 residues long: Cell division topological specificity factor (90 aa).

It belongs to the MinE family.

Prevents the cell division inhibition by proteins MinC and MinD at internal division sites while permitting inhibition at polar sites. This ensures cell division at the proper site by restricting the formation of a division septum at the midpoint of the long axis of the cell. The sequence is that of Cell division topological specificity factor from Bordetella avium (strain 197N).